The chain runs to 209 residues: UPF0502 protein PSHAa0076 (209 aa).

The protein belongs to the UPF0502 family.

In Pseudoalteromonas translucida (strain TAC 125), this protein is UPF0502 protein PSHAa0076.